Reading from the N-terminus, the 90-residue chain is uncharacterized protein (90 aa).

Lys-88 participates in a covalent cross-link: Isoglutamyl lysine isopeptide (Lys-Gln) (interchain with Q-Cter in protein Pup).

This is an uncharacterized protein from Mycolicibacterium smegmatis (strain ATCC 700084 / mc(2)155) (Mycobacterium smegmatis).